The primary structure comprises 297 residues: Large ribosomal subunit protein uL18 (297 aa).

The residue at position 2 (G2) is an N-acetylglycine. K5 and K48 each carry N6-acetyllysine. Residue S185 is modified to Phosphoserine. K220 is modified (N6-acetyllysine; alternate). Residue K220 forms a Glycyl lysine isopeptide (Lys-Gly) (interchain with G-Cter in SUMO1); alternate linkage. K220 is covalently cross-linked (Glycyl lysine isopeptide (Lys-Gly) (interchain with G-Cter in SUMO2); alternate). T232 is subject to Phosphothreonine. The disordered stretch occupies residues 253 to 297 (YEKKPKKEVKKKRWNRPKMSLAQKKDRVAQKKASFLRAQERAAES). Residues 258-268 (KKEVKKKRWNR) are compositionally biased toward basic residues. Phosphoserine is present on S272.

The protein belongs to the universal ribosomal protein uL18 family. In terms of assembly, component of the large ribosomal subunit (LSU). Part of the 5S RNP complex, which is a LSU subcomplex composed of the 5S RNA, RPL5 and RPL11. Component of a hexameric 5S RNP precursor complex, composed of 5S RNA, RRS1, RPF2/BXDC1, RPL5, RPL11 and HEATR3; this complex acts as a precursor for ribosome assembly. Interacts with isoform 1 of NVL in an ATP-dependent manner. Interacts with RRP1B. Interacts with IPO5, IPO7 and KPNB1; these interactions may be involved in RPL5 nuclear import for the assembly of ribosomal subunits.

The protein resides in the cytoplasm. Its subcellular location is the nucleus. It is found in the nucleolus. Component of the ribosome, a large ribonucleoprotein complex responsible for the synthesis of proteins in the cell. The small ribosomal subunit (SSU) binds messenger RNAs (mRNAs) and translates the encoded message by selecting cognate aminoacyl-transfer RNA (tRNA) molecules. The large subunit (LSU) contains the ribosomal catalytic site termed the peptidyl transferase center (PTC), which catalyzes the formation of peptide bonds, thereby polymerizing the amino acids delivered by tRNAs into a polypeptide chain. The nascent polypeptides leave the ribosome through a tunnel in the LSU and interact with protein factors that function in enzymatic processing, targeting, and the membrane insertion of nascent chains at the exit of the ribosomal tunnel. As part of the 5S RNP/5S ribonucleoprotein particle it is an essential component of the LSU, required for its formation and the maturation of rRNAs. It also couples ribosome biogenesis to p53/TP53 activation. As part of the 5S RNP it accumulates in the nucleoplasm and inhibits MDM2, when ribosome biogenesis is perturbed, mediating the stabilization and the activation of TP53. The polypeptide is Large ribosomal subunit protein uL18 (RPL5) (Homo sapiens (Human)).